The sequence spans 167 residues: Crossover junction endodeoxyribonuclease RuvC (167 aa).

Residues Asp-11, Glu-71, and Asp-143 contribute to the active site. The Mg(2+) site is built by Asp-11, Glu-71, and Asp-143.

This sequence belongs to the RuvC family. Homodimer which binds Holliday junction (HJ) DNA. The HJ becomes 2-fold symmetrical on binding to RuvC with unstacked arms; it has a different conformation from HJ DNA in complex with RuvA. In the full resolvosome a probable DNA-RuvA(4)-RuvB(12)-RuvC(2) complex forms which resolves the HJ. Requires Mg(2+) as cofactor.

The protein resides in the cytoplasm. It catalyses the reaction Endonucleolytic cleavage at a junction such as a reciprocal single-stranded crossover between two homologous DNA duplexes (Holliday junction).. Its function is as follows. The RuvA-RuvB-RuvC complex processes Holliday junction (HJ) DNA during genetic recombination and DNA repair. Endonuclease that resolves HJ intermediates. Cleaves cruciform DNA by making single-stranded nicks across the HJ at symmetrical positions within the homologous arms, yielding a 5'-phosphate and a 3'-hydroxyl group; requires a central core of homology in the junction. The consensus cleavage sequence is 5'-(A/T)TT(C/G)-3'. Cleavage occurs on the 3'-side of the TT dinucleotide at the point of strand exchange. HJ branch migration catalyzed by RuvA-RuvB allows RuvC to scan DNA until it finds its consensus sequence, where it cleaves and resolves the cruciform DNA. The protein is Crossover junction endodeoxyribonuclease RuvC of Acidiphilium cryptum (strain JF-5).